The primary structure comprises 413 residues: L-methionine gamma-lyase (413 aa).

Residues 75–77 (YGR) and 105–106 (GM) contribute to the pyridoxal 5'-phosphate site. Tyr-131 is a substrate binding site. 218-220 (SAT) lines the pyridoxal 5'-phosphate pocket. Lys-221 carries the N6-(pyridoxal phosphate)lysine modification. Substrate is bound at residue Arg-365. The disordered stretch occupies residues 388–413 (RLPETAGAGREPSRTALRLPERAADR).

It belongs to the trans-sulfuration enzymes family. In terms of assembly, homotetramer; dimer of active dimers. Pyridoxal 5'-phosphate is required as a cofactor.

It catalyses the reaction L-methionine + H2O = methanethiol + 2-oxobutanoate + NH4(+). The catalysed reaction is L-homocysteine + H2O = 2-oxobutanoate + hydrogen sulfide + NH4(+) + H(+). It carries out the reaction L-cysteine + H2O = hydrogen sulfide + pyruvate + NH4(+) + H(+). In terms of biological role, catalyzes the alpha,gamma-elimination of L-methionine to produce methanethiol, 2-oxobutanoate and ammonia. Is probably involved in L-methionine catabolism. Is also able to catalyze the alpha,gamma-elimination of L-homocysteine, and, to a lesser extent, the alpha,beta-elimination of L-cysteine. The protein is L-methionine gamma-lyase of Streptomyces avermitilis (strain ATCC 31267 / DSM 46492 / JCM 5070 / NBRC 14893 / NCIMB 12804 / NRRL 8165 / MA-4680).